The chain runs to 189 residues: Chitin synthase 1 (189 aa).

This sequence belongs to the chitin synthase family. Class I subfamily.

The protein resides in the cell membrane. The enzyme catalyses [(1-&gt;4)-N-acetyl-beta-D-glucosaminyl](n) + UDP-N-acetyl-alpha-D-glucosamine = [(1-&gt;4)-N-acetyl-beta-D-glucosaminyl](n+1) + UDP + H(+). In terms of biological role, polymerizes chitin, a structural polymer of the cell wall and septum, by transferring the sugar moiety of UDP-GlcNAc to the non-reducing end of the growing chitin polymer. This chain is Chitin synthase 1 (chs1), found in Aspergillus niger.